The chain runs to 113 residues: MPTRSREEYFNLPLKVDESSGTIGKMFVLVIYDISDNRRRASLAKILAGFGYRVQESAFEAMLTKGQLAKLVARIDRFAIDCDNIRIYKIRGVAAVTFYGRGRLVSAEEFVFF.

Position 33 (Asp-33) interacts with Mg(2+).

The protein belongs to the CRISPR-associated endoribonuclease Cas2 protein family. Homodimer, forms a heterotetramer with a Cas1 homodimer. Mg(2+) serves as cofactor.

CRISPR (clustered regularly interspaced short palindromic repeat), is an adaptive immune system that provides protection against mobile genetic elements (viruses, transposable elements and conjugative plasmids). CRISPR clusters contain sequences complementary to antecedent mobile elements and target invading nucleic acids. CRISPR clusters are transcribed and processed into CRISPR RNA (crRNA). Functions as a ssRNA-specific endoribonuclease. Involved in the integration of spacer DNA into the CRISPR cassette. The type III-A Csm effector complex binds crRNA and acts as a crRNA-guided RNase, DNase and cyclic oligoadenylate synthase; binding of target RNA cognate to the crRNA is required for all activities. This is CRISPR-associated endoribonuclease Cas2 from Mycobacterium tuberculosis (strain CDC 1551 / Oshkosh).